A 311-amino-acid chain; its full sequence is Ribosomal RNA large subunit methyltransferase F (311 aa).

It belongs to the methyltransferase superfamily. METTL16/RlmF family.

The protein localises to the cytoplasm. It carries out the reaction adenosine(1618) in 23S rRNA + S-adenosyl-L-methionine = N(6)-methyladenosine(1618) in 23S rRNA + S-adenosyl-L-homocysteine + H(+). Its function is as follows. Specifically methylates the adenine in position 1618 of 23S rRNA. The sequence is that of Ribosomal RNA large subunit methyltransferase F from Pectobacterium atrosepticum (strain SCRI 1043 / ATCC BAA-672) (Erwinia carotovora subsp. atroseptica).